Consider the following 189-residue polypeptide: UPF0312 protein VIBHAR_05924 (189 aa).

A signal peptide spans 1-22 (MKKSLFATGLAIAIALPFGANA).

This sequence belongs to the UPF0312 family. Type 1 subfamily.

It is found in the periplasm. This chain is UPF0312 protein VIBHAR_05924, found in Vibrio campbellii (strain ATCC BAA-1116).